The chain runs to 235 residues: Putative cobalt transport protein CbiM 2 (235 aa).

The next 7 membrane-spanning stretches (helical) occupy residues 9 to 29 (PAGWCLVWWLIALPFLVMGII), 41 to 61 (YLPLLGVCGAFIFILSALKLP), 80 to 100 (FGYCVTAVVGAIVLLFQALLL), 107 to 127 (TMGANMVSMAIGGPIAGYAVY), 135 to 155 (INIYVTVFLASAVADIVTYII), 160 to 180 (LALAYPAQVGGFLASFSAFFS), and 181 to 201 (IFAITQIPLSIMEGVVLALVF).

This sequence belongs to the CbiM family. Forms an energy-coupling factor (ECF) transporter complex composed of an ATP-binding protein (A component, CbiO), a transmembrane protein (T component, CbiQ) and 2 possible substrate-capture proteins (S components, CbiM and CbiN) of unknown stoichimetry.

The protein localises to the cell membrane. The protein operates within cofactor biosynthesis; adenosylcobalamin biosynthesis. Part of the energy-coupling factor (ECF) transporter complex CbiMNOQ involved in cobalt import. In Methanosphaerula palustris (strain ATCC BAA-1556 / DSM 19958 / E1-9c), this protein is Putative cobalt transport protein CbiM 2.